We begin with the raw amino-acid sequence, 530 residues long: Ubiquitin carboxyl-terminal hydrolase 17-like protein 18 (530 aa).

The USP domain occupies 80 to 375 (AGLQNMGNTC…QAYVLFYIQK (296 aa)). Catalysis depends on Cys89, which acts as the Nucleophile. His334 (proton acceptor) is an active-site residue. Basic and acidic residues-rich tracts occupy residues 382-392 (SESVSRGREPR) and 398-413 (DTDR…RDHP). Disordered stretches follow at residues 382 to 414 (SESV…DHPC) and 509 to 530 (RGRA…LVCQ). The span at 510–524 (GRARRSKGKNKHSKR) shows a compositional bias: basic residues.

The protein belongs to the peptidase C19 family. USP17 subfamily.

The protein resides in the nucleus. It localises to the endoplasmic reticulum. The catalysed reaction is Thiol-dependent hydrolysis of ester, thioester, amide, peptide and isopeptide bonds formed by the C-terminal Gly of ubiquitin (a 76-residue protein attached to proteins as an intracellular targeting signal).. Functionally, deubiquitinating enzyme that removes conjugated ubiquitin from specific proteins to regulate different cellular processes that may include cell proliferation, progression through the cell cycle, apoptosis, cell migration, and the cellular response to viral infection. This is Ubiquitin carboxyl-terminal hydrolase 17-like protein 18 (USP17L18) from Homo sapiens (Human).